The sequence spans 61 residues: uncharacterized protein (61 aa).

At 1 to 20 (MSSTTSTINLSSLGSAINDV) the chain is on the extracellular side. The chain crosses the membrane as a helical span at residues 21–41 (LNIIVQYLPVFVTVAVLFGII). The Cytoplasmic segment spans residues 42–61 (TYMTGGLGGLFSGITGIFGS).

The protein resides in the host membrane. This is an uncharacterized protein from Acidianus filamentous virus 2 (isolate Italy/Pozzuoli) (AFV-2).